The primary structure comprises 190 residues: MDRGEEPMSARPALETESLRFLHVTVGSLLASYGWYILFSCVLLYIVIQKLSLRLRALRQRQLDQAEAVLEPDVVVKRQEALAAARLRMQEDLNAQVEKHKEKQRQLEEEKRRQKIEMWDSMQEGRSYKRNSGRPQEEDGPGPSTSSVIPKGKSDKKPLRGGGYNPLTGEGGGTCSWRPGRRGPSSGGUS.

The chain crosses the membrane as a helical span at residues 28 to 48 (SLLASYGWYILFSCVLLYIVI). The tract at residues 78 to 90 (RQEALAAARLRMQ) is VCP/p97-interacting motif (VIM). The segment at 96 to 190 (QVEKHKEKQR…RRGPSSGGUS (95 aa)) is disordered. The span at 97–118 (VEKHKEKQRQLEEEKRRQKIEM) shows a compositional bias: basic and acidic residues. Gly residues predominate over residues 160-174 (RGGGYNPLTGEGGGT). Position 189 (selenocysteine 189) is a non-standard amino acid, selenocysteine.

Belongs to the selenoprotein S family. In terms of assembly, interacts with DERL1 and (via VIM motif) with VCP, suggesting that it forms a membrane complex with DERL1 that serves as a receptor for VCP. Also interacts with DERL2, DERL3 and SELENOK. The SELENOK-SELENOS complex interacts with VCP. Interacts with CCDC47. Post-translationally, truncated SELENOS proteins produced by failed UGA/Sec decoding are ubiquitinated by the CRL2(KLHDC2) and CRL2(KLHDC3) complexes, which recognizes the glycine (Gly) at the C-terminus of truncated SELENOS proteins. Truncated SELENOS proteins produced by failed UGA/Sec decoding are also ubiquitinated by the CRL5(KLHDC1) complex.

The protein resides in the endoplasmic reticulum membrane. The protein localises to the cytoplasm. Its function is as follows. Involved in the degradation process of misfolded endoplasmic reticulum (ER) luminal proteins. Participates in the transfer of misfolded proteins from the ER to the cytosol, where they are destroyed by the proteasome in a ubiquitin-dependent manner. Probably acts by serving as a linker between DERL1, which mediates the retrotranslocation of misfolded proteins into the cytosol, and the ATPase complex VCP, which mediates the translocation and ubiquitination. In Rattus norvegicus (Rat), this protein is Selenoprotein S.